We begin with the raw amino-acid sequence, 95 residues long: Aspartyl/glutamyl-tRNA(Asn/Gln) amidotransferase subunit C (95 aa).

It belongs to the GatC family. Heterotrimer of A, B and C subunits.

The enzyme catalyses L-glutamyl-tRNA(Gln) + L-glutamine + ATP + H2O = L-glutaminyl-tRNA(Gln) + L-glutamate + ADP + phosphate + H(+). It catalyses the reaction L-aspartyl-tRNA(Asn) + L-glutamine + ATP + H2O = L-asparaginyl-tRNA(Asn) + L-glutamate + ADP + phosphate + 2 H(+). In terms of biological role, allows the formation of correctly charged Asn-tRNA(Asn) or Gln-tRNA(Gln) through the transamidation of misacylated Asp-tRNA(Asn) or Glu-tRNA(Gln) in organisms which lack either or both of asparaginyl-tRNA or glutaminyl-tRNA synthetases. The reaction takes place in the presence of glutamine and ATP through an activated phospho-Asp-tRNA(Asn) or phospho-Glu-tRNA(Gln). The chain is Aspartyl/glutamyl-tRNA(Asn/Gln) amidotransferase subunit C from Chromohalobacter salexigens (strain ATCC BAA-138 / DSM 3043 / CIP 106854 / NCIMB 13768 / 1H11).